We begin with the raw amino-acid sequence, 252 residues long: Short chain dehydrogenase andC (252 aa).

The first 25 residues, 1 to 25 (MGFLQDKVVIITGAAAGIGLATATA), serve as a signal peptide directing secretion. NADP(+)-binding residues include Ile11, Asp57, and Arg119. Ser137 functions as the Proton donor in the catalytic mechanism. Residues Tyr151 and Lys155 each coordinate NADP(+). Tyr151 serves as the catalytic Proton acceptor. Lys155 serves as the catalytic Lowers pKa of active site Tyr.

It belongs to the short-chain dehydrogenases/reductases (SDR) family.

Its pathway is secondary metabolite biosynthesis; terpenoid biosynthesis. In terms of biological role, short chain dehydrogenase; part of the gene cluster that mediates the biosynthesis of anditomin, a fungal meroterpenoid. The first step of the pathway is the synthesis of 3,5-dimethylorsellinic acid (DMOA) by the polyketide synthase andM. DMOA is then converted to the phthalide compound 5,7-dihydroxy-4,6-dimethylphthalide (DHDMP) by the cytochrome P450 monooxygenase andK, which is further prenylated by the prenyltransferase andD to yield farnesyl-DHDMP. Further epoxidation by the FAD-dependent monooxygenase andE leads to epoxyfarnesyl-DHDMP. The next step involves the terpene cyclase andB that converts epoxyfarnesyl-DHDMP into preandiloid A through opening of the epoxide ring followed by the cyclization of the farnesyl moiety. Preandiloid A is in turn oxidized at the C-3 hydroxyl group to yield preandiloid B by the dehydrogenase andC. The dioxygenase andA is solely responsible for the dehydrogenation of preandiloid B leading to the enone preandiloid C, as well as for the intriguing structural rearrangement to generate the bicyclo[2.2.2]octane core, transforming preandiloid C into andiconin. FAD-binding monooxygenase andJ then produces andilesin D which is reduced by dehydrogenase andI to yield andilesin A. Action of acetyltransferase andG followed by a spontaneous acetate elimination leads then to andilesin B, which is in turn substrate of the short chain dehydrogenase andH to yield andilesin C. Finally, the dioxygenase andF catalyzes the transformation of andilesin C to anditomin. The protein is Short chain dehydrogenase andC of Emericella variicolor (Aspergillus stellatus).